Reading from the N-terminus, the 387-residue chain is Phosphoglycerate kinase (387 aa).

Substrate contacts are provided by residues 21–23 (DLN), arginine 36, and 59–62 (HLGR). The residue at position 84 (lysine 84) is an N6-acetyllysine. Substrate is bound by residues arginine 113 and arginine 146. Residues lysine 197, glutamate 314, and 340–343 (GGDT) each bind ATP.

Belongs to the phosphoglycerate kinase family. In terms of assembly, monomer.

Its subcellular location is the cytoplasm. It catalyses the reaction (2R)-3-phosphoglycerate + ATP = (2R)-3-phospho-glyceroyl phosphate + ADP. It functions in the pathway carbohydrate degradation; glycolysis; pyruvate from D-glyceraldehyde 3-phosphate: step 2/5. In Escherichia coli O139:H28 (strain E24377A / ETEC), this protein is Phosphoglycerate kinase.